The chain runs to 482 residues: Probable F-box protein At1g30780 (482 aa).

The F-box domain occupies 230 to 280 (EIDLDSLPFDLKMVILTRLSAKSLTNFKRVSKMWSSIIGSQRFIDSFFTMS).

In Arabidopsis thaliana (Mouse-ear cress), this protein is Probable F-box protein At1g30780.